We begin with the raw amino-acid sequence, 231 residues long: Aldehyde decarbonylase (231 aa).

The Fe cation site is built by Glu32, Glu60, His63, Glu115, and His147.

Belongs to the aldehyde decarbonylase family. The cofactor is Binds 2 metal cations per subunit. The catalytic dinuclear metal-binding site could be either a di-iron or a manganese-iron cofactor..

The enzyme catalyses a long-chain fatty aldehyde + 2 NADPH + O2 + H(+) = a long-chain alkane + formate + 2 NADP(+) + H2O. In terms of biological role, catalyzes the decarbonylation of fatty aldehydes to alkanes. Requires the presence of ferredoxin, ferredoxin reductase and NADPH for in vitro decarbonylase activity. Involved in the biosynthesis of alkanes, mainly heptadecane and pentadecane. This Synechococcus elongatus (strain ATCC 33912 / PCC 7942 / FACHB-805) (Anacystis nidulans R2) protein is Aldehyde decarbonylase.